Consider the following 211-residue polypeptide: Large ribosomal subunit protein bL17c (211 aa).

Residues 1 to 95 constitute a chloroplast transit peptide; the sequence is MAIPMSMAMA…IVDGGGRIYA (95 aa).

Belongs to the bacterial ribosomal protein bL17 family. Part of the 50S ribosomal subunit.

It localises to the plastid. It is found in the chloroplast. This protein binds directly to 23S ribosomal RNA. The chain is Large ribosomal subunit protein bL17c (RPL17) from Arabidopsis thaliana (Mouse-ear cress).